The chain runs to 213 residues: Motile sperm domain-containing protein 1 (213 aa).

Residues 16 to 143 (PVFVFPTELI…KEHLTESLFF (128 aa)) form the MSP domain. 2 helical membrane-spanning segments follow: residues 159-179 (SLLTVFLGVVCIAALMLPTLG) and 191-211 (LSVNQKLVAAYILGLITMAIL). Positions 205 to 208 (LITM) match the Nuclear export signal motif.

It localises to the endoplasmic reticulum membrane. It is found in the golgi apparatus membrane. Functionally, plays a role in differentiation and/or proliferation of mesenchymal stem cells. Proposed to be involved in epithelial-to-mesenchymal transition (EMT). However, another study suggests that it is not required for EMT or stem cell self-renewal and acts during later stages of differentiation. This Homo sapiens (Human) protein is Motile sperm domain-containing protein 1 (MOSPD1).